The sequence spans 437 residues: GTPase Der (437 aa).

2 consecutive EngA-type G domains span residues 4 to 167 and 176 to 351; these read PVIA…PEDE and IRIS…ENHN. GTP contacts are provided by residues 10–17, 57–61, 119–122, 182–189, 229–233, and 294–297; these read GRPNVGKS, DTGGI, NKID, DTAGM, and NKWD. One can recognise a KH-like domain in the interval 352-436; that stretch reads LRVPTHVLND…PIKIIARKKN (85 aa).

It belongs to the TRAFAC class TrmE-Era-EngA-EngB-Septin-like GTPase superfamily. EngA (Der) GTPase family. As to quaternary structure, associates with the 50S ribosomal subunit.

GTPase that plays an essential role in the late steps of ribosome biogenesis. This is GTPase Der from Halalkalibacterium halodurans (strain ATCC BAA-125 / DSM 18197 / FERM 7344 / JCM 9153 / C-125) (Bacillus halodurans).